The chain runs to 151 residues: UPF0178 protein Pfl01_5469 (151 aa).

The protein belongs to the UPF0178 family.

This Pseudomonas fluorescens (strain Pf0-1) protein is UPF0178 protein Pfl01_5469.